The sequence spans 315 residues: Ribosomal RNA small subunit methyltransferase H (315 aa).

Residues Gly-37–His-39, Asp-57, Phe-83, Asp-105, and Gln-112 contribute to the S-adenosyl-L-methionine site.

This sequence belongs to the methyltransferase superfamily. RsmH family.

The protein resides in the cytoplasm. The catalysed reaction is cytidine(1402) in 16S rRNA + S-adenosyl-L-methionine = N(4)-methylcytidine(1402) in 16S rRNA + S-adenosyl-L-homocysteine + H(+). Specifically methylates the N4 position of cytidine in position 1402 (C1402) of 16S rRNA. In Pseudomonas putida (strain ATCC 700007 / DSM 6899 / JCM 31910 / BCRC 17059 / LMG 24140 / F1), this protein is Ribosomal RNA small subunit methyltransferase H.